The following is a 395-amino-acid chain: GA-binding protein subunit beta-1 (395 aa).

An N-acetylserine modification is found at serine 2. ANK repeat units lie at residues aspartate 5–threonine 34 and leucine 37–alanine 66. An N6-acetyllysine modification is found at lysine 69. ANK repeat units lie at residues valine 70–alanine 99, leucine 103–threonine 132, and phenylalanine 136–threonine 166. Positions aspartate 258–alanine 327 are transcription activation and HCFC1 interaction. 2 positions are modified to N6-acetyllysine: lysine 352 and lysine 381.

As to quaternary structure, heterotetramer of two alpha and two beta subunits. Interacts with HCFC1, causing repression of transcriptional activity. Acetylated by EP300/p300. Deacetylated by SIRT7, promoting heterotetramerization and activity.

It localises to the nucleus. Its function is as follows. Transcription factor capable of interacting with purine rich repeats (GA repeats). Acts as a master regulator of nuclear-encoded mitochondrial genes. In terms of biological role, (Microbial infection) Necessary for the expression of the Adenovirus E4 gene. In Homo sapiens (Human), this protein is GA-binding protein subunit beta-1 (GABPB1).